A 58-amino-acid chain; its full sequence is Large ribosomal subunit protein bL32 (58 aa).

The protein belongs to the bacterial ribosomal protein bL32 family.

In Anaplasma marginale (strain Florida), this protein is Large ribosomal subunit protein bL32.